We begin with the raw amino-acid sequence, 167 residues long: Translation initiation factor IF-3 (167 aa).

This sequence belongs to the IF-3 family. In terms of assembly, monomer.

It is found in the cytoplasm. Functionally, IF-3 binds to the 30S ribosomal subunit and shifts the equilibrium between 70S ribosomes and their 50S and 30S subunits in favor of the free subunits, thus enhancing the availability of 30S subunits on which protein synthesis initiation begins. This chain is Translation initiation factor IF-3, found in Bacillus anthracis.